The sequence spans 759 residues: Zinc finger protein 287 (759 aa).

The 83-residue stretch at 42 to 124 folds into the SCAN box domain; sequence RRNFRNFPYP…ALVEDLTQIL (83 aa). The tract at residues 127–154 is disordered; it reads EEAPQSSALPQDTPEDDPNHDPNPASQA. Positions 166–234 constitute a KRAB domain; that stretch reads VTFNDVAVDI…IKEIVEGPNP (69 aa). 14 C2H2-type zinc fingers span residues 366 to 388, 394 to 416, 422 to 444, 450 to 472, 478 to 500, 506 to 528, 534 to 556, 562 to 584, 590 to 612, 618 to 640, 646 to 668, 674 to 696, 702 to 724, and 730 to 752; these read YSCNVCGKQFRKYPSLLAHRENH, YECEECGKEFKHLSSLIAHQRMH, YECHQCGKAFSQRAHLTIHQRIH, YKCEDCGKDFSQRAHLTIHQRTH, YKCLECSKTFSHSSSLINHQRVH, YICNECGKTFSQSTHLLQHQKIH, YKCNECWKVFSQSTYLIRHQRIH, YKCTACGKAFAHSSTLIQHQTTH, YICNVCGKAFSQSANLTQHHRTH, YKCSVCGKAFSQSVHLTQHQRIH, FKCNTCGKAYRQGANLTQHQRVH, YKCHHCGKAFIYSSSLNQHRRTH, YKCSHCNKDFSQRTCLIQHQRIH, and YGCRICGKAFTQSTNLIQHQRVH.

It belongs to the krueppel C2H2-type zinc-finger protein family. In terms of tissue distribution, expressed in brain and at low levels in kidney and spleen and few hematopoietic cell lines.

Its subcellular location is the nucleus. In terms of biological role, may be involved in transcriptional regulation. The chain is Zinc finger protein 287 from Mus musculus (Mouse).